A 711-amino-acid polypeptide reads, in one-letter code: Protein mono-ADP-ribosyltransferase PARP12 (711 aa).

3 consecutive C3H1-type zinc fingers follow at residues 103-128 (LCKFLIYGNCKFLKTGKNCRNGHNLK), 164-188 (ICLHYNKGDGPFGSCSFQKQCIKLH), and 189-211 (ICQYFLQGECKFGTSCKRSHEFT). A disordered region spans residues 247–279 (SALSKVSPSPAGPQGSSERKDSSGPVSPGTPSQ). Residue Ser268 is modified to Phosphoserine. C3H1-type zinc fingers lie at residues 280-307 (EESEQICLYHIRKSCSFQEKCHRVHFHL) and 281-306 (ESEQICLYHIRKSCSFQEKCHRVHFH). WWE domains are found at residues 308-371 (PYRW…RLST) and 374-468 (SVTK…KVCR). Cys484 bears the ADP-ribosylcysteine mark. Residues 494-708 (IPDYWDPAAL…IFVALGNLFT (215 aa)) enclose the PARP catalytic domain. Asp610 and Asp621 each carry ADP-ribosyl aspartic acid.

The protein belongs to the ARTD/PARP family. Interacts with PARP11; this interaction plays a key role in zika virus suppression. Interacts with ISG15. Post-translationally, auto-mono-ADP-ribosylated. Phosphorylated by PRKD1.

It localises to the nucleus. The protein resides in the golgi apparatus. The protein localises to the trans-Golgi network. Its subcellular location is the cytoplasm. It is found in the stress granule. It carries out the reaction L-aspartyl-[protein] + NAD(+) = 4-O-(ADP-D-ribosyl)-L-aspartyl-[protein] + nicotinamide. The enzyme catalyses L-cysteinyl-[protein] + NAD(+) = S-(ADP-D-ribosyl)-L-cysteinyl-[protein] + nicotinamide + H(+). Functionally, mono-ADP-ribosyltransferase that mediates mono-ADP-ribosylation of target proteins. Displays anti-alphavirus activity during IFN-gamma immune activation by directly ADP-ribosylating the alphaviral non-structural proteins nsP3 and nsP4. Acts as a component of the PRKD1-driven regulatory cascade that selectively controls a major branch of the basolateral transport pathway by catalyzing the MARylation of GOLGA1. Acts also as a key regulator of mitochondrial function, protein translation, and inflammation. Inhibits PINK1/Parkin-dependent mitophagy and promotes cartilage degeneration by inhibiting the ubiquitination and SUMOylation of MFN1/2 by upregulating ISG15 and ISGylation. The chain is Protein mono-ADP-ribosyltransferase PARP12 from Mus musculus (Mouse).